Reading from the N-terminus, the 447-residue chain is Tubulin beta chain (447 aa).

GTP contacts are provided by Gln-11, Glu-69, Ser-138, Gly-142, Thr-143, Gly-144, Asn-204, and Asn-226. Glu-69 lines the Mg(2+) pocket. The tract at residues 419–447 (VSEYQQYQDATADEEGEYEDEDQEAEDDM) is disordered. The segment covering 429-447 (TADEEGEYEDEDQEAEDDM) has biased composition (acidic residues).

Belongs to the tubulin family. Dimer of alpha and beta chains. A typical microtubule is a hollow water-filled tube with an outer diameter of 25 nm and an inner diameter of 15 nM. Alpha-beta heterodimers associate head-to-tail to form protofilaments running lengthwise along the microtubule wall with the beta-tubulin subunit facing the microtubule plus end conferring a structural polarity. Microtubules usually have 13 protofilaments but different protofilament numbers can be found in some organisms and specialized cells. Mg(2+) is required as a cofactor.

The protein resides in the cytoplasm. It localises to the cytoskeleton. Functionally, tubulin is the major constituent of microtubules, a cylinder consisting of laterally associated linear protofilaments composed of alpha- and beta-tubulin heterodimers. Microtubules grow by the addition of GTP-tubulin dimers to the microtubule end, where a stabilizing cap forms. Below the cap, tubulin dimers are in GDP-bound state, owing to GTPase activity of alpha-tubulin. The sequence is that of Tubulin beta chain (TUBB) from Hordeum vulgare (Barley).